A 170-amino-acid chain; its full sequence is Adenine phosphoribosyltransferase (170 aa).

The protein belongs to the purine/pyrimidine phosphoribosyltransferase family. Homodimer.

Its subcellular location is the cytoplasm. The enzyme catalyses AMP + diphosphate = 5-phospho-alpha-D-ribose 1-diphosphate + adenine. The protein operates within purine metabolism; AMP biosynthesis via salvage pathway; AMP from adenine: step 1/1. In terms of biological role, catalyzes a salvage reaction resulting in the formation of AMP, that is energically less costly than de novo synthesis. This chain is Adenine phosphoribosyltransferase, found in Oceanobacillus iheyensis (strain DSM 14371 / CIP 107618 / JCM 11309 / KCTC 3954 / HTE831).